The chain runs to 357 residues: Biotin synthase (357 aa).

The 228-residue stretch at 41–268 (NEVQISRLLS…KSRVRLSAGR (228 aa)) folds into the Radical SAM core domain. [4Fe-4S] cluster contacts are provided by cysteine 56, cysteine 60, and cysteine 63. Cysteine 100, cysteine 131, cysteine 191, and arginine 263 together coordinate [2Fe-2S] cluster.

Belongs to the radical SAM superfamily. Biotin synthase family. As to quaternary structure, homodimer. It depends on [4Fe-4S] cluster as a cofactor. [2Fe-2S] cluster serves as cofactor.

The catalysed reaction is (4R,5S)-dethiobiotin + (sulfur carrier)-SH + 2 reduced [2Fe-2S]-[ferredoxin] + 2 S-adenosyl-L-methionine = (sulfur carrier)-H + biotin + 2 5'-deoxyadenosine + 2 L-methionine + 2 oxidized [2Fe-2S]-[ferredoxin]. It participates in cofactor biosynthesis; biotin biosynthesis; biotin from 7,8-diaminononanoate: step 2/2. Catalyzes the conversion of dethiobiotin (DTB) to biotin by the insertion of a sulfur atom into dethiobiotin via a radical-based mechanism. The polypeptide is Biotin synthase (Shewanella denitrificans (strain OS217 / ATCC BAA-1090 / DSM 15013)).